A 46-amino-acid chain; its full sequence is Large ribosomal subunit protein bL36B (46 aa).

Belongs to the bacterial ribosomal protein bL36 family.

This Cronobacter sakazakii (strain ATCC BAA-894) (Enterobacter sakazakii) protein is Large ribosomal subunit protein bL36B.